Consider the following 480-residue polypeptide: Zinc finger protein ztf-6 (480 aa).

4 disordered regions span residues 92-160, 174-198, 282-307, and 328-351; these read CHDS…TMMV, GTNG…EEHD, LDAG…PTAS, and DANT…MKVP. Composition is skewed to low complexity over residues 95–105, 131–145, 174–187, and 286–296; these read SATSTTTTVSH, SSIE…SSSV, GTNG…TSSS, and SSENDGSTSSS. C2H2-type zinc fingers lie at residues 359–383 and 388–410; these read YICP…FVTH and FNCD…QKIH. The segment at 416 to 441 adopts a C2H2-type 3; degenerate zinc-finger fold; that stretch reads YQCRGCGTNYTTQNGLRLHRQRNPAC. The segment at 461-480 is disordered; the sequence is ALSGPLSKNSSPTKQMVSAP.

Probable transcription factor, involved in regulation of dopamine neuron lineage specification. May play a role in maintaining robustness of the Wnt/beta-catenin asymmetry pathway. This chain is Zinc finger protein ztf-6, found in Caenorhabditis elegans.